The chain runs to 708 residues: Leukotoxin translocation ATP-binding protein LktB (708 aa).

The 126-residue stretch at 1–126 folds into the Peptidase C39 domain; sequence MEANHQRNDL…ACYQGQLILV (126 aa). Positions 155 to 437 constitute an ABC transmembrane type-1 domain; sequence FLETLIVSIF…LAQLWQDFQQ (283 aa). A run of 5 helical transmembrane segments spans residues 159 to 179, 192 to 212, 270 to 290, 296 to 316, and 389 to 409; these read LIVSIFLQIFALITPLFFQVV, LNIITVALAIVIIFEIVLSGL, ALTSVLDLLFSFIFFAVMWYY, LVILGSLPCYILWSIFISPIL, and VMVINLWLGAHLVISGDLSIG. One can recognise an ABC transporter domain in the interval 469 to 704; it reads ISFKNIRFRY…SNGLYSYLHQ (236 aa). 503–510 provides a ligand contact to ATP; sequence GRSGSGKS.

This sequence belongs to the ABC transporter superfamily. Protein-1 exporter (TC 3.A.1.109) family. Homodimer.

Its subcellular location is the cell inner membrane. It catalyses the reaction ATP + H2O + proteinSide 1 = ADP + phosphate + proteinSide 2.. Its function is as follows. Part of the ABC transporter complex LktBD involved in leukotoxin export. Transmembrane domains (TMD) form a pore in the inner membrane and the ATP-binding domain (NBD) is responsible for energy generation. This Mannheimia haemolytica (Pasteurella haemolytica) protein is Leukotoxin translocation ATP-binding protein LktB (lktB).